A 141-amino-acid chain; its full sequence is Auxin-responsive protein SAUR64 (141 aa).

The protein belongs to the ARG7 family.

The protein resides in the cell membrane. In terms of biological role, may promote auxin-stimulated organ elongation, such as hypocotyls, stamen filaments and petals. The polypeptide is Auxin-responsive protein SAUR64 (Arabidopsis thaliana (Mouse-ear cress)).